The primary structure comprises 567 residues: Oxygen-dependent choline dehydrogenase (567 aa).

Aspartate 6–glutamate 35 serves as a coordination point for FAD. Residues glutamine 182–alanine 203 form a disordered region. Histidine 475 functions as the Proton acceptor in the catalytic mechanism.

It belongs to the GMC oxidoreductase family. FAD serves as cofactor.

It carries out the reaction choline + A = betaine aldehyde + AH2. The enzyme catalyses betaine aldehyde + NAD(+) + H2O = glycine betaine + NADH + 2 H(+). It participates in amine and polyamine biosynthesis; betaine biosynthesis via choline pathway; betaine aldehyde from choline (cytochrome c reductase route): step 1/1. Its function is as follows. Involved in the biosynthesis of the osmoprotectant glycine betaine. Catalyzes the oxidation of choline to betaine aldehyde and betaine aldehyde to glycine betaine at the same rate. The polypeptide is Oxygen-dependent choline dehydrogenase (Pseudomonas fluorescens (strain ATCC BAA-477 / NRRL B-23932 / Pf-5)).